A 1213-amino-acid chain; its full sequence is DNA-directed RNA polymerase subunit beta' (1213 aa).

4 residues coordinate Zn(2+): C60, C62, C75, and C78. Residues D450, D452, and D454 each coordinate Mg(2+). C819, C893, C900, and C903 together coordinate Zn(2+).

The protein belongs to the RNA polymerase beta' chain family. In terms of assembly, the RNAP catalytic core consists of 2 alpha, 1 beta, 1 beta' and 1 omega subunit. When a sigma factor is associated with the core the holoenzyme is formed, which can initiate transcription. Mg(2+) is required as a cofactor. Zn(2+) serves as cofactor.

It carries out the reaction RNA(n) + a ribonucleoside 5'-triphosphate = RNA(n+1) + diphosphate. Its function is as follows. DNA-dependent RNA polymerase catalyzes the transcription of DNA into RNA using the four ribonucleoside triphosphates as substrates. The chain is DNA-directed RNA polymerase subunit beta' from Streptococcus pyogenes serotype M28 (strain MGAS6180).